A 269-amino-acid polypeptide reads, in one-letter code: Diaminopimelate epimerase (269 aa).

Substrate-binding residues include Asn-15, Gln-49, and Asn-66. The active-site Proton donor is Cys-75. Substrate-binding positions include 76–77, Asn-155, Asn-187, and 204–205; these read GN and ER. The active-site Proton acceptor is Cys-213. 214 to 215 provides a ligand contact to substrate; it reads GS.

Belongs to the diaminopimelate epimerase family. In terms of assembly, homodimer.

It localises to the cytoplasm. It catalyses the reaction (2S,6S)-2,6-diaminopimelate = meso-2,6-diaminopimelate. Its pathway is amino-acid biosynthesis; L-lysine biosynthesis via DAP pathway; DL-2,6-diaminopimelate from LL-2,6-diaminopimelate: step 1/1. In terms of biological role, catalyzes the stereoinversion of LL-2,6-diaminopimelate (L,L-DAP) to meso-diaminopimelate (meso-DAP), a precursor of L-lysine and an essential component of the bacterial peptidoglycan. The sequence is that of Diaminopimelate epimerase from Rickettsia canadensis (strain McKiel).